The primary structure comprises 1073 residues: Carbamoyl phosphate synthase large chain (1073 aa).

The carboxyphosphate synthetic domain stretch occupies residues methionine 1 to aspartate 402. Arginine 129, arginine 169, glycine 175, glycine 176, lysine 208, leucine 210, glutamate 215, glycine 241, valine 242, histidine 243, glutamine 284, and glutamate 299 together coordinate ATP. One can recognise an ATP-grasp 1 domain in the interval arginine 133–leucine 328. Mg(2+)-binding residues include glutamine 284, glutamate 299, and asparagine 301. Positions 284, 299, and 301 each coordinate Mn(2+). An oligomerization domain region spans residues isoleucine 403 to glutamate 555. Residues proline 556–asparagine 944 are carbamoyl phosphate synthetic domain. Positions serine 681–leucine 871 constitute an ATP-grasp 2 domain. Residues arginine 717, lysine 756, leucine 758, glutamate 763, glycine 787, valine 788, histidine 789, serine 790, glutamine 830, and glutamate 842 each coordinate ATP. Residues glutamine 830, glutamate 842, and asparagine 844 each contribute to the Mg(2+) site. Mn(2+) is bound by residues glutamine 830, glutamate 842, and asparagine 844. Positions asparagine 944–phenylalanine 1073 constitute an MGS-like domain. The tract at residues arginine 945 to phenylalanine 1073 is allosteric domain.

The protein belongs to the CarB family. In terms of assembly, composed of two chains; the small (or glutamine) chain promotes the hydrolysis of glutamine to ammonia, which is used by the large (or ammonia) chain to synthesize carbamoyl phosphate. Tetramer of heterodimers (alpha,beta)4. Requires Mg(2+) as cofactor. It depends on Mn(2+) as a cofactor.

It catalyses the reaction hydrogencarbonate + L-glutamine + 2 ATP + H2O = carbamoyl phosphate + L-glutamate + 2 ADP + phosphate + 2 H(+). The enzyme catalyses hydrogencarbonate + NH4(+) + 2 ATP = carbamoyl phosphate + 2 ADP + phosphate + 2 H(+). The protein operates within amino-acid biosynthesis; L-arginine biosynthesis; carbamoyl phosphate from bicarbonate: step 1/1. It participates in pyrimidine metabolism; UMP biosynthesis via de novo pathway; (S)-dihydroorotate from bicarbonate: step 1/3. In terms of biological role, large subunit of the glutamine-dependent carbamoyl phosphate synthetase (CPSase). CPSase catalyzes the formation of carbamoyl phosphate from the ammonia moiety of glutamine, carbonate, and phosphate donated by ATP, constituting the first step of 2 biosynthetic pathways, one leading to arginine and/or urea and the other to pyrimidine nucleotides. The large subunit (synthetase) binds the substrates ammonia (free or transferred from glutamine from the small subunit), hydrogencarbonate and ATP and carries out an ATP-coupled ligase reaction, activating hydrogencarbonate by forming carboxy phosphate which reacts with ammonia to form carbamoyl phosphate. This Hyperthermus butylicus (strain DSM 5456 / JCM 9403 / PLM1-5) protein is Carbamoyl phosphate synthase large chain.